Consider the following 902-residue polypeptide: Tiger protein B1 (902 aa).

The signal sequence occupies residues 1 to 24 (MKVIYIYLLLLLVCKFLFVKSSCS). At 25–803 (LKVGKIECTK…IIYSENKSTG (779 aa)) the chain is on the extracellular side. N-linked (GlcNAc...) asparagine glycans are attached at residues Asn43, Asn144, Asn184, Asn223, Asn272, Asn279, Asn288, Asn358, Asn389, Asn398, Asn437, Asn559, Asn628, Asn644, Asn706, Asn753, Asn764, Asn771, and Asn799. Residues 249–323 (MEGVLNDNGG…ITIDGEYKSN (75 aa)) enclose the IPT/TIG 1 domain. 2 IPT/TIG domains span residues 603–680 (PIIE…ISSS) and 704–788 (ITNT…IFQF). A helical membrane pass occupies residues 804–824 (FPNEMYLGFVVFVIFIALISF). Over 825-902 (AAKNQIEKYF…IRRCFKEHTD (78 aa)) the chain is Cytoplasmic.

Its subcellular location is the cell membrane. Functionally, tgrB1 and tgrC1 are involved in kin discrimination. They play an essential role in aggregation and subsequent development. This chain is Tiger protein B1 (tgrB1), found in Dictyostelium discoideum (Social amoeba).